We begin with the raw amino-acid sequence, 162 residues long: Single-stranded DNA-binding protein 1 (162 aa).

One can recognise an SSB domain in the interval L5–G110. Residues G110–F162 form a disordered region. The segment covering S122–S140 has biased composition (low complexity). Over residues G141–G151 the composition is skewed to polar residues.

As to quaternary structure, homotetramer.

The polypeptide is Single-stranded DNA-binding protein 1 (ssb1) (Chlorobaculum tepidum (strain ATCC 49652 / DSM 12025 / NBRC 103806 / TLS) (Chlorobium tepidum)).